A 29-amino-acid polypeptide reads, in one-letter code: Kalata-B15 (29 aa).

The segment at residues 1 to 29 (GLPVCGESCFGGSCYTPGCSCTWPICTRD) is a cross-link (cyclopeptide (Gly-Asp)). 3 cysteine pairs are disulfide-bonded: Cys-5–Cys-19, Cys-9–Cys-21, and Cys-14–Cys-26.

Post-translationally, this is a cyclic peptide.

Functionally, probably participates in a plant defense mechanism. The chain is Kalata-B15 from Oldenlandia affinis.